The following is a 581-amino-acid chain: Arginine--tRNA ligase (581 aa).

Residues 126–136 carry the 'HIGH' region motif; the sequence is PNLAKEMHVGH.

Belongs to the class-I aminoacyl-tRNA synthetase family. As to quaternary structure, monomer.

It is found in the cytoplasm. It carries out the reaction tRNA(Arg) + L-arginine + ATP = L-arginyl-tRNA(Arg) + AMP + diphosphate. The chain is Arginine--tRNA ligase from Shewanella woodyi (strain ATCC 51908 / MS32).